A 541-amino-acid polypeptide reads, in one-letter code: Synaptotagmin-1 (541 aa).

The Extracellular segment spans residues 1 to 11 (MGFFSTILGFC). A helical membrane pass occupies residues 12–32 (GFGVGISLGLVIGYVLFVYLL). Over 33–541 (PNDVKDPEIR…QIELEWRTAS (509 aa)) the chain is Cytoplasmic. The 183-residue stretch at 67–249 (DFDRVDWINR…WPKTLVVPIL (183 aa)) folds into the SMP-LTD domain. The segment at 227–509 (QEQIKDQVAN…TLGYVDIPVV (283 aa)) is phospholipid binding. C2 domains follow at residues 240–362 (WPKT…AFTL) and 401–521 (GFEE…NQKF). Ca(2+) contacts are provided by Asp-276, Asp-282, Asp-332, and Glu-334.

The protein belongs to the synaptotagmin family. In terms of assembly, interacts with cabbage leaf curl virus (CaLCuV) BC1 protein and tobacco mosaic virus (TMV) MP protein. Interacts with ROSY1. The cofactor is Ca(2+). In terms of tissue distribution, expressed in roots, shoots, rosette and cauline leaves, inflorescences, and siliques. In roots, expressed in vascular bundle, epidermis, the differential zone of the tips of root hairs, and the quiescent center and columella of root tips.

The protein resides in the cell membrane. It localises to the endosome membrane. Its function is as follows. Plays an important role in maintaining plasma membrane integrity during freezing and osmotic stresses. May function in membrane resealing during calcium-dependent freezing tolerance. May regulate endocytosis and endosome recycling at the plasma membrane and cell-to-cell trafficking of cabbage leaf curl virus (CaLCuV) and tobacco mosaic virus (TMV) movement proteins via plasmodesmata. This chain is Synaptotagmin-1 (SYT1), found in Arabidopsis thaliana (Mouse-ear cress).